Reading from the N-terminus, the 225-residue chain is NAD(P)H-quinone oxidoreductase subunit K, chloroplastic (225 aa).

[4Fe-4S] cluster-binding residues include cysteine 43, cysteine 44, cysteine 108, and cysteine 139.

It belongs to the complex I 20 kDa subunit family. In terms of assembly, NDH is composed of at least 16 different subunits, 5 of which are encoded in the nucleus. The cofactor is [4Fe-4S] cluster.

It is found in the plastid. Its subcellular location is the chloroplast thylakoid membrane. The enzyme catalyses a plastoquinone + NADH + (n+1) H(+)(in) = a plastoquinol + NAD(+) + n H(+)(out). The catalysed reaction is a plastoquinone + NADPH + (n+1) H(+)(in) = a plastoquinol + NADP(+) + n H(+)(out). NDH shuttles electrons from NAD(P)H:plastoquinone, via FMN and iron-sulfur (Fe-S) centers, to quinones in the photosynthetic chain and possibly in a chloroplast respiratory chain. The immediate electron acceptor for the enzyme in this species is believed to be plastoquinone. Couples the redox reaction to proton translocation, and thus conserves the redox energy in a proton gradient. The polypeptide is NAD(P)H-quinone oxidoreductase subunit K, chloroplastic (Vitis vinifera (Grape)).